A 628-amino-acid polypeptide reads, in one-letter code: Netrin-4 (628 aa).

The first 18 residues, 1–18 (MGSCARLLLLWGCTVVAA), serve as a signal peptide directing secretion. The region spanning 30–261 (CEKACNPRMG…AIYDFIVKGS (232 aa)) is the Laminin N-terminal domain. N-linked (GlcNAc...) asparagine glycosylation is found at Asn-56 and Asn-163. Disulfide bonds link Cys-262–Cys-271, Cys-264–Cys-293, Cys-295–Cys-304, Cys-307–Cys-329, Cys-332–Cys-341, Cys-334–Cys-359, Cys-362–Cys-371, Cys-374–Cys-392, Cys-395–Cys-413, Cys-397–Cys-420, Cys-422–Cys-431, and Cys-434–Cys-446. 3 Laminin EGF-like domains span residues 262–331 (CFCN…ECRT), 332–394 (CKCN…ACKP), and 395–448 (CSCH…GCRP). The N-linked (GlcNAc...) asparagine glycan is linked to Asn-353. Asn-483 is a glycosylation site (N-linked (GlcNAc...) asparagine). 2 disulfide bridges follow: Cys-506-Cys-576 and Cys-520-Cys-627. An NTR domain is found at 506–627 (CECKEQTLGN…KVMDILKREC (122 aa)).

In terms of assembly, may form a homodimer. Expressed in kidney, spleen, mammary gland, aorta, heart, ovary, prostate and fetal spleen.

The protein localises to the secreted. It is found in the extracellular space. It localises to the extracellular matrix. Its subcellular location is the basement membrane. In terms of biological role, may play an important role in neural, kidney and vascular development. Promotes neurite elongation from olfactory bulb explants. The protein is Netrin-4 (NTN4) of Homo sapiens (Human).